Reading from the N-terminus, the 410-residue chain is Envelope glycoprotein (410 aa).

Over P1–L410 the chain is Extracellular. Residues N6 and N21 are each glycosylated (N-linked (GlcNAc...) asparagine; by host). 2 disulfide bridges follow: C85-C107 and C99-C112. The tract at residues P193–K242 is disordered. The span at S210–A230 shows a compositional bias: polar residues. N-linked (GlcNAc...) asparagine; by host glycans are attached at residues N227, N262, and N267. A CXXC motif is present at residues C272–C275. N-linked (GlcNAc...) asparagine; by host glycans are attached at residues N294, N334, N350, and N370.

The mature envelope protein (Env) consists of a trimer of SU-TM heterodimers attached by a labile interchain disulfide bond. In terms of processing, specific enzymatic cleavages in vivo yield mature proteins. Envelope glycoproteins are synthesized as an inactive precursor that is N-glycosylated and processed likely by host cell furin or by a furin-like protease in the Golgi to yield the mature SU and TM proteins. The cleavage site between SU and TM requires the minimal sequence [KR]-X-[KR]-R.

It is found in the virion membrane. It localises to the host cell membrane. The surface protein (SU) attaches the virus to the host cell by binding to its receptor. This interaction triggers the refolding of the transmembrane protein (TM) and is thought to activate its fusogenic potential by unmasking its fusion peptide. Fusion occurs at the host cell plasma membrane. Its function is as follows. The transmembrane protein (TM) acts as a class I viral fusion protein. Under the current model, the protein has at least 3 conformational states: pre-fusion native state, pre-hairpin intermediate state, and post-fusion hairpin state. During viral and target cell membrane fusion, the coiled coil regions (heptad repeats) assume a trimer-of-hairpins structure, positioning the fusion peptide in close proximity to the C-terminal region of the ectodomain. The formation of this structure appears to drive apposition and subsequent fusion of viral and target cell membranes. Membranes fusion leads to delivery of the nucleocapsid into the cytoplasm. The chain is Envelope glycoprotein (env) from Feline leukemia virus (strain C/FA27).